We begin with the raw amino-acid sequence, 760 residues long: BMP/retinoic acid-inducible neural-specific protein 1 (760 aa).

A signal peptide spans 1–16; it reads MNWRFVELLYFLFVWG. In terms of domain architecture, MACPF spans 68–251; sequence RYKIYREFAR…FVQSALSYIM (184 aa). N-linked (GlcNAc...) asparagine glycosylation is found at asparagine 156, asparagine 433, asparagine 443, asparagine 553, asparagine 599, asparagine 630, and asparagine 676.

This sequence belongs to the BRINP family.

The protein resides in the cytoplasm. In terms of biological role, plays a role in neurogenesis and brain development. May suppress cell cycle progression in postmitotic neurons by inhibiting G1/S transition. The chain is BMP/retinoic acid-inducible neural-specific protein 1 (Brinp1) from Rattus norvegicus (Rat).